The following is a 436-amino-acid chain: GDP-mannose 6-dehydrogenase (436 aa).

The NAD(+) site is built by Tyr-10, Val-11, Asp-30, Lys-35, Thr-86, and Thr-124. The GDP-alpha-D-mannuronate site is built by Glu-161, Lys-210, Asn-214, His-217, Asn-225, Tyr-256, Tyr-257, Arg-259, and Gly-265. Cys-268 is an active-site residue. Lys-271 lines the NAD(+) pocket. Position 324 (Lys-324) interacts with GDP-alpha-D-mannuronate. Arg-331 serves as a coordination point for NAD(+).

Belongs to the UDP-glucose/GDP-mannose dehydrogenase family.

It carries out the reaction GDP-alpha-D-mannose + 2 NAD(+) + H2O = GDP-alpha-D-mannuronate + 2 NADH + 3 H(+). It participates in glycan biosynthesis; alginate biosynthesis. In terms of biological role, catalyzes the oxidation of guanosine diphospho-D-mannose (GDP-D-mannose) to GDP-D-mannuronic acid, a precursor for alginate polymerization. The alginate layer causes a mucoid phenotype and is essential for cyst formation. The polypeptide is GDP-mannose 6-dehydrogenase (algD) (Azotobacter vinelandii).